The chain runs to 647 residues: Sialidase (647 aa).

Residues 1 to 37 (MTANPYLRRLPRRRAVSFLLAPALAAATVAGASPAQA) form the signal peptide. A substrate-binding site is contributed by Arg-68. The active-site Proton acceptor is Asp-92. BNR repeat units lie at residues 102–113 (RRSTDGGRTWGE), 175–186 (ATSTDGGLTWSH), and 239–250 (VYSDDHGRTWRA). Glu-260 serves as the catalytic Nucleophile. Arg-276 is a binding site for substrate. BNR repeat units lie at residues 287 to 298 (AVSTDGGHSYGP) and 348 to 359 (RMSCDDGQTWPV). Tyr-370 functions as the Nucleophile in the catalytic mechanism. The region spanning 496-646 (TFTVTVGLLD…AVAELEVEGQ (151 aa)) is the F5/8 type C domain.

The protein belongs to the glycosyl hydrolase 33 family.

The protein resides in the secreted. It carries out the reaction Hydrolysis of alpha-(2-&gt;3)-, alpha-(2-&gt;6)-, alpha-(2-&gt;8)- glycosidic linkages of terminal sialic acid residues in oligosaccharides, glycoproteins, glycolipids, colominic acid and synthetic substrates.. Functionally, to release sialic acids for use as carbon and energy sources for this non-pathogenic bacterium while in pathogenic microorganisms, sialidases have been suggested to be pathogenic factors. In Micromonospora viridifaciens, this protein is Sialidase (nedA).